We begin with the raw amino-acid sequence, 180 residues long: ATP-dependent protease subunit HslV (180 aa).

Thr2 is an active-site residue. 3 residues coordinate Na(+): Gly157, Cys160, and Ser163.

It belongs to the peptidase T1B family. HslV subfamily. A double ring-shaped homohexamer of HslV is capped on each side by a ring-shaped HslU homohexamer. The assembly of the HslU/HslV complex is dependent on binding of ATP.

Its subcellular location is the cytoplasm. It catalyses the reaction ATP-dependent cleavage of peptide bonds with broad specificity.. Allosterically activated by HslU binding. Functionally, protease subunit of a proteasome-like degradation complex believed to be a general protein degrading machinery. The polypeptide is ATP-dependent protease subunit HslV (Wigglesworthia glossinidia brevipalpis).